Consider the following 295-residue polypeptide: MFDETMRQPPDGEGSVQVEMDPALHIETAKVFAIYGKGGIGKSTTSSNLSAAFSKLGKRVVQIGCDPKHDSTFTLTKRLVPTVIDVLQAVHFHTEELRVEDFVYEGYNGVMCVEAGGPPAGTGCGGYVVGQTVKLLKEHHILEDADVVVFDVLGDVVCGGFATPLQHAERALVVAANDFDSIFAANRIAAAIQAKAKNYDVRLGGIIANRSVATDQIERFNARSGMRTLAHFPDLDVIRRSRLCKSTLFEMEPSPELAAVQQEYLRLAEALWEGVEPLTATPLIDREIFDLLGFD.

ATP contacts are provided by residues 39–44 and Lys68; that span reads GIGKST. Ser43 serves as a coordination point for Mg(2+). Positions 124 and 158 each coordinate [4Fe-4S] cluster. Residues 209–210 and 233–235 each bind ATP; these read NR and PDL.

Belongs to the NifH/BchL/ChlL family. In terms of assembly, homodimer. Protochlorophyllide reductase is composed of three subunits; BchL, BchN and BchB. The cofactor is [4Fe-4S] cluster.

It catalyses the reaction chlorophyllide a + oxidized 2[4Fe-4S]-[ferredoxin] + 2 ADP + 2 phosphate = protochlorophyllide a + reduced 2[4Fe-4S]-[ferredoxin] + 2 ATP + 2 H2O. Its pathway is porphyrin-containing compound metabolism; bacteriochlorophyll biosynthesis (light-independent). Its function is as follows. Component of the dark-operative protochlorophyllide reductase (DPOR) that uses Mg-ATP and reduced ferredoxin to reduce ring D of protochlorophyllide (Pchlide) to form chlorophyllide a (Chlide). This reaction is light-independent. The L component serves as a unique electron donor to the NB-component of the complex, and binds Mg-ATP. This Rhodospirillum rubrum (strain ATCC 11170 / ATH 1.1.1 / DSM 467 / LMG 4362 / NCIMB 8255 / S1) protein is Light-independent protochlorophyllide reductase iron-sulfur ATP-binding protein.